Here is a 181-residue protein sequence, read N- to C-terminus: ABC transporter E family member 3 (181 aa).

The 157-residue stretch at Ser20–Gly176 folds into the ABC transporter domain. ATP is bound at residue Gly27–Thr34.

Belongs to the ABC transporter superfamily. ABCE family. In terms of tissue distribution, mostly expressed in roots and leaves, and, to a lower extent, in stems, flowers and siliques.

The protein is ABC transporter E family member 3 (ABCE3) of Arabidopsis thaliana (Mouse-ear cress).